A 300-amino-acid polypeptide reads, in one-letter code: Transcription termination/antitermination protein NusG (300 aa).

The disordered stretch occupies residues 1–99; the sequence is MSDPNVNDAI…EAEEPELDPI (99 aa). Composition is skewed to acidic residues over residues 14-41 and 47-97; these read ESVE…EAAD and ETDE…PELD.

Belongs to the NusG family.

Functionally, participates in transcription elongation, termination and antitermination. This Streptomyces coelicolor (strain ATCC BAA-471 / A3(2) / M145) protein is Transcription termination/antitermination protein NusG.